Here is a 399-residue protein sequence, read N- to C-terminus: S-adenosylmethionine synthase (399 aa).

Residue His17 coordinates ATP. Asp19 serves as a coordination point for Mg(2+). Position 45 (Glu45) interacts with K(+). L-methionine is bound by residues Glu58 and Gln101. Positions 101–111 (QSADIAMGVDQ) are flexible loop. ATP contacts are provided by residues 177–179 (DGK), 244–245 (RF), Asp253, 259–260 (RK), Ala276, and Lys280. An L-methionine-binding site is contributed by Asp253. Residue Lys284 coordinates L-methionine.

This sequence belongs to the AdoMet synthase family. As to quaternary structure, homotetramer; dimer of dimers. Mg(2+) is required as a cofactor. The cofactor is K(+).

The protein resides in the cytoplasm. The catalysed reaction is L-methionine + ATP + H2O = S-adenosyl-L-methionine + phosphate + diphosphate. It participates in amino-acid biosynthesis; S-adenosyl-L-methionine biosynthesis; S-adenosyl-L-methionine from L-methionine: step 1/1. Functionally, catalyzes the formation of S-adenosylmethionine (AdoMet) from methionine and ATP. The overall synthetic reaction is composed of two sequential steps, AdoMet formation and the subsequent tripolyphosphate hydrolysis which occurs prior to release of AdoMet from the enzyme. In Bacillus thuringiensis (strain Al Hakam), this protein is S-adenosylmethionine synthase.